We begin with the raw amino-acid sequence, 286 residues long: Fructose-bisphosphate aldolase (286 aa).

Position 50 (Ser-50) interacts with D-glyceraldehyde 3-phosphate. Asp-85 serves as the catalytic Proton donor. Zn(2+) contacts are provided by His-86, Asp-107, Glu-137, and His-181. Residue Gly-182 participates in dihydroxyacetone phosphate binding. A Zn(2+)-binding site is contributed by His-209. Dihydroxyacetone phosphate contacts are provided by residues 210–212 and 231–234; these read GGT and NVNT.

It belongs to the class II fructose-bisphosphate aldolase family. Requires Zn(2+) as cofactor.

The catalysed reaction is beta-D-fructose 1,6-bisphosphate = D-glyceraldehyde 3-phosphate + dihydroxyacetone phosphate. The protein operates within carbohydrate degradation; glycolysis; D-glyceraldehyde 3-phosphate and glycerone phosphate from D-glucose: step 4/4. Its function is as follows. Catalyzes the aldol condensation of dihydroxyacetone phosphate (DHAP or glycerone-phosphate) with glyceraldehyde 3-phosphate (G3P) to form fructose 1,6-bisphosphate (FBP) in gluconeogenesis and the reverse reaction in glycolysis. In Staphylococcus aureus (strain MSSA476), this protein is Fructose-bisphosphate aldolase (fba).